A 589-amino-acid polypeptide reads, in one-letter code: Ectoderm-neural cortex protein 1 (589 aa).

Residues 46–114 enclose the BTB domain; it reads TDVLLHAGNR…AYSSRVIINE (69 aa). Kelch repeat units lie at residues 296–340, 341–388, 389–444, 446–492, 494–538, and 539–585; these read ALFL…AIGC, KVYI…ELKH, CLYV…SAKL, LFAF…VLGN, IFIM…ASGN, and KLYV…STWK.

As to quaternary structure, binds to RB1. Hypophosphorylated RB1 associates with ENC1 during neuronal differentiation, while hyperphosphorylated RB1 associates with ENC1 in undifferentiating cells. Part of a complex that contains CUL3, RBX1 and ENC1. Interacts indirectly with KEAP1. Post-translationally, ubiquitinated by E3 ubiquitin ligase complex formed by CUL3 and RBX1 and probably targeted for proteasome-independent degradation. Quinone-induced oxidative stress increases its ubiquitination. In terms of tissue distribution, primarily expressed in the nervous system.

It is found in the nucleus matrix. Its subcellular location is the cytoplasm. The protein resides in the cytoskeleton. Functionally, actin-binding protein involved in the regulation of neuronal process formation and in differentiation of neural crest cells. Down-regulates transcription factor NF2L2/NRF2 by decreasing the rate of protein synthesis and not via a ubiquitin-mediated proteasomal degradation mechanism. This Mus musculus (Mouse) protein is Ectoderm-neural cortex protein 1 (Enc1).